The sequence spans 201 residues: Large ribosomal subunit protein bL25 (201 aa).

Belongs to the bacterial ribosomal protein bL25 family. CTC subfamily. As to quaternary structure, part of the 50S ribosomal subunit; part of the 5S rRNA/L5/L18/L25 subcomplex. Contacts the 5S rRNA. Binds to the 5S rRNA independently of L5 and L18.

This is one of the proteins that binds to the 5S RNA in the ribosome where it forms part of the central protuberance. This Akkermansia muciniphila (strain ATCC BAA-835 / DSM 22959 / JCM 33894 / BCRC 81048 / CCUG 64013 / CIP 107961 / Muc) protein is Large ribosomal subunit protein bL25.